We begin with the raw amino-acid sequence, 79 residues long: MFVKTGDKVKVIAGKDKGKEGTVLSVNAKTNRIVVKGVNKIKKHEKPSQANANGGVVEKEGSIHASNVKVIAKKEDNNK.

The protein belongs to the universal ribosomal protein uL24 family. Part of the 50S ribosomal subunit.

In terms of biological role, one of two assembly initiator proteins, it binds directly to the 5'-end of the 23S rRNA, where it nucleates assembly of the 50S subunit. One of the proteins that surrounds the polypeptide exit tunnel on the outside of the subunit. This Lactobacillus gasseri (strain ATCC 33323 / DSM 20243 / BCRC 14619 / CIP 102991 / JCM 1131 / KCTC 3163 / NCIMB 11718 / NCTC 13722 / AM63) protein is Large ribosomal subunit protein uL24.